Reading from the N-terminus, the 241-residue chain is Uridylate kinase (241 aa).

12-15 (KLSG) serves as a coordination point for ATP. The interval 20–25 (GATGYG) is involved in allosteric activation by GTP. Gly-54 contacts UMP. Residues Gly-55 and Arg-59 each contribute to the ATP site. Residues Asp-74 and 135–142 (TGNPYMTT) contribute to the UMP site. ATP contacts are provided by Asn-163, Tyr-169, and Asp-172.

The protein belongs to the UMP kinase family. Homohexamer.

The protein localises to the cytoplasm. The catalysed reaction is UMP + ATP = UDP + ADP. Its pathway is pyrimidine metabolism; CTP biosynthesis via de novo pathway; UDP from UMP (UMPK route): step 1/1. Its activity is regulated as follows. Allosterically activated by GTP. Inhibited by UTP. Functionally, catalyzes the reversible phosphorylation of UMP to UDP. The polypeptide is Uridylate kinase (Dehalococcoides mccartyi (strain CBDB1)).